A 61-amino-acid chain; its full sequence is Large ribosomal subunit protein uL29 (61 aa).

It belongs to the universal ribosomal protein uL29 family.

The chain is Large ribosomal subunit protein uL29 from Campylobacter curvus (strain 525.92).